The primary structure comprises 402 residues: Flavohemoprotein (402 aa).

The Globin domain maps to 1–138 (MLSPEVRALV…LADLLIGRER (138 aa)). His85 contributes to the heme b binding site. Active-site charge relay system residues include Tyr95 and Glu137. Residues 149–402 (GGWTGWRAFK…AEVFGTGGVA (254 aa)) are reductase. The region spanning 152–261 (TGWRAFKVVR…SPPQGDFTLD (110 aa)) is the FAD-binding FR-type domain. Residues Tyr190 and 206 to 209 (RQYS) contribute to the FAD site. An NADP(+)-binding site is contributed by 274 to 279 (GVGLTP). 395 to 398 (VFGT) is a binding site for FAD.

The protein belongs to the globin family. Two-domain flavohemoproteins subfamily. This sequence in the C-terminal section; belongs to the flavoprotein pyridine nucleotide cytochrome reductase family. Heme b serves as cofactor. It depends on FAD as a cofactor.

It catalyses the reaction 2 nitric oxide + NADPH + 2 O2 = 2 nitrate + NADP(+) + H(+). The catalysed reaction is 2 nitric oxide + NADH + 2 O2 = 2 nitrate + NAD(+) + H(+). In terms of biological role, is involved in NO detoxification in an aerobic process, termed nitric oxide dioxygenase (NOD) reaction that utilizes O(2) and NAD(P)H to convert NO to nitrate, which protects the bacterium from various noxious nitrogen compounds. Therefore, plays a central role in the inducible response to nitrosative stress. The chain is Flavohemoprotein from Bordetella bronchiseptica (strain ATCC BAA-588 / NCTC 13252 / RB50) (Alcaligenes bronchisepticus).